Consider the following 863-residue polypeptide: DNA replication licensing factor MCM4 (863 aa).

Over residues 1 to 10 (MSSPASTPSR) the composition is skewed to low complexity. Disordered regions lie at residues 1–60 (MSSP…VDLQ) and 91–126 (TYGTPSSRVEGTPRSGVRGTPVRQRPDLGSAQKGLQ). S2 carries the N-acetylserine modification. S6 bears the Phosphoserine; by CDC7 mark. Phosphothreonine occurs at positions 7 and 19. Residues S26, S31, S32, and S34 each carry the phosphoserine modification. Phosphothreonine is present on T102. A Phosphoserine modification is found at S105. Phosphothreonine is present on T110. Phosphoserine occurs at positions 120, 131, 142, and 145. N6-acetyllysine is present on K220. A Glycyl lysine isopeptide (Lys-Gly) (interchain with G-Cter in SUMO2) cross-link involves residue K439. N6-acetyllysine is present on K450. In terms of domain architecture, MCM spans 458-667 (IYERLASALA…YDRRLAHHLV (210 aa)). The ATP site is built by Y471, R497, K516, S517, N618, R643, R732, and E735. The short motif at 642 to 645 (SRFD) is the Arginine finger element. Residue K798 forms a Glycyl lysine isopeptide (Lys-Gly) (interchain with G-Cter in SUMO2) linkage. K858 carries the post-translational modification N6-acetyllysine.

It belongs to the MCM family. In terms of assembly, component of the MCM2-7 complex. The complex forms a toroidal hexameric ring with the proposed subunit order MCM2-MCM6-MCM4-MCM7-MCM3-MCM5. Component of the CMG helicase complex, a hexameric ring of related MCM2-7 subunits stabilized by CDC45 and the tetrameric GINS complex. Interacts with MCMBP. In terms of processing, sumoylated; SUMO2 modified in response to stress caused by inhibition of proteasome activity (in vitro).

The protein localises to the nucleus. The protein resides in the chromosome. The catalysed reaction is ATP + H2O = ADP + phosphate + H(+). Acts as a component of the MCM2-7 complex (MCM complex) which is the replicative helicase essential for 'once per cell cycle' DNA replication initiation and elongation in eukaryotic cells. Core component of CDC45-MCM-GINS (CMG) helicase, the molecular machine that unwinds template DNA during replication, and around which the replisome is built. The active ATPase sites in the MCM2-7 ring are formed through the interaction surfaces of two neighboring subunits such that a critical structure of a conserved arginine finger motif is provided in trans relative to the ATP-binding site of the Walker A box of the adjacent subunit. The six ATPase active sites, however, are likely to contribute differentially to the complex helicase activity. In Homo sapiens (Human), this protein is DNA replication licensing factor MCM4.